Here is a 301-residue protein sequence, read N- to C-terminus: RNA polymerase II holoenzyme cyclin-like subunit (301 aa).

In terms of domain architecture, Cyclin N-terminal spans glutamine 53–serine 142.

It belongs to the cyclin family. Cyclin C subfamily. As to quaternary structure, component of the srb8-11 complex, a regulatory module of the Mediator complex.

The protein localises to the nucleus. Component of the srb8-11 complex. The srb8-11 complex is a regulatory module of the Mediator complex which is itself involved in regulation of basal and activated RNA polymerase II-dependent transcription. The srb8-11 complex may be involved in the transcriptional repression of a subset of genes regulated by Mediator. It may inhibit the association of the Mediator complex with RNA polymerase II to form the holoenzyme complex. The srb8-11 complex phosphorylates the C-terminal domain (CTD) of the largest subunit of RNA polymerase II. In Aspergillus oryzae (strain ATCC 42149 / RIB 40) (Yellow koji mold), this protein is RNA polymerase II holoenzyme cyclin-like subunit (ssn8).